A 271-amino-acid polypeptide reads, in one-letter code: 4-hydroxy-tetrahydrodipicolinate reductase (271 aa).

Residues 11–16 and Glu37 each bind NAD(+); that span reads GGSGRM. Arg38 provides a ligand contact to NADP(+). Residues 101–103 and 125–128 contribute to the NAD(+) site; these read GTT and APNM. His158 acts as the Proton donor/acceptor in catalysis. Position 159 (His159) interacts with (S)-2,3,4,5-tetrahydrodipicolinate. Lys162 serves as the catalytic Proton donor. 168–169 provides a ligand contact to (S)-2,3,4,5-tetrahydrodipicolinate; sequence GT.

This sequence belongs to the DapB family.

The protein localises to the cytoplasm. The enzyme catalyses (S)-2,3,4,5-tetrahydrodipicolinate + NAD(+) + H2O = (2S,4S)-4-hydroxy-2,3,4,5-tetrahydrodipicolinate + NADH + H(+). It catalyses the reaction (S)-2,3,4,5-tetrahydrodipicolinate + NADP(+) + H2O = (2S,4S)-4-hydroxy-2,3,4,5-tetrahydrodipicolinate + NADPH + H(+). Its pathway is amino-acid biosynthesis; L-lysine biosynthesis via DAP pathway; (S)-tetrahydrodipicolinate from L-aspartate: step 4/4. Its function is as follows. Catalyzes the conversion of 4-hydroxy-tetrahydrodipicolinate (HTPA) to tetrahydrodipicolinate. This Shewanella halifaxensis (strain HAW-EB4) protein is 4-hydroxy-tetrahydrodipicolinate reductase.